Consider the following 567-residue polypeptide: Glucose-6-phosphate isomerase, cytosolic A (567 aa).

Residues 156 to 157 (GS), 212 to 217 (SKTFTT), Q356, E360, H391, and K516 each bind D-glucose 6-phosphate. Catalysis depends on E360, which acts as the Proton donor. Catalysis depends on residues H391 and K516.

This sequence belongs to the GPI family. Homodimer.

Its subcellular location is the cytoplasm. The catalysed reaction is alpha-D-glucose 6-phosphate = beta-D-fructose 6-phosphate. It participates in carbohydrate degradation; glycolysis; D-glyceraldehyde 3-phosphate and glycerone phosphate from D-glucose: step 2/4. Its function is as follows. Catalyzes the conversion of glucose-6-phosphate to fructose-6-phosphate, the second step in glycolysis, and the reverse reaction during gluconeogenesis. This chain is Glucose-6-phosphate isomerase, cytosolic A, found in Oryza sativa subsp. japonica (Rice).